The sequence spans 122 residues: Large ribosomal subunit protein uL14 (122 aa).

This sequence belongs to the universal ribosomal protein uL14 family. In terms of assembly, part of the 50S ribosomal subunit. Forms a cluster with proteins L3 and L19. In the 70S ribosome, L14 and L19 interact and together make contacts with the 16S rRNA in bridges B5 and B8.

Functionally, binds to 23S rRNA. Forms part of two intersubunit bridges in the 70S ribosome. This chain is Large ribosomal subunit protein uL14, found in Orientia tsutsugamushi (strain Ikeda) (Rickettsia tsutsugamushi).